Here is a 155-residue protein sequence, read N- to C-terminus: Ribosome maturation factor RimP (155 aa).

This sequence belongs to the RimP family.

Its subcellular location is the cytoplasm. Functionally, required for maturation of 30S ribosomal subunits. The polypeptide is Ribosome maturation factor RimP (Deinococcus geothermalis (strain DSM 11300 / CIP 105573 / AG-3a)).